Consider the following 1004-residue polypeptide: 2-oxoglutarate dehydrogenase E1 component (1004 aa).

This sequence belongs to the alpha-ketoglutarate dehydrogenase family. As to quaternary structure, homodimer. Part of the 2-oxoglutarate dehydrogenase (OGDH) complex composed of E1 (2-oxoglutarate dehydrogenase), E2 (dihydrolipoamide succinyltransferase) and E3 (dihydrolipoamide dehydrogenase); the complex contains multiple copies of the three enzymatic components (E1, E2 and E3). Thiamine diphosphate serves as cofactor.

The catalysed reaction is N(6)-[(R)-lipoyl]-L-lysyl-[protein] + 2-oxoglutarate + H(+) = N(6)-[(R)-S(8)-succinyldihydrolipoyl]-L-lysyl-[protein] + CO2. Functionally, E1 component of the 2-oxoglutarate dehydrogenase (OGDH) complex which catalyzes the decarboxylation of 2-oxoglutarate, the first step in the conversion of 2-oxoglutarate to succinyl-CoA and CO(2). In Brucella suis biovar 1 (strain 1330), this protein is 2-oxoglutarate dehydrogenase E1 component.